A 197-amino-acid chain; its full sequence is 3-isopropylmalate dehydratase small subunit (197 aa).

It belongs to the LeuD family. LeuD type 1 subfamily. In terms of assembly, heterodimer of LeuC and LeuD.

The catalysed reaction is (2R,3S)-3-isopropylmalate = (2S)-2-isopropylmalate. Its pathway is amino-acid biosynthesis; L-leucine biosynthesis; L-leucine from 3-methyl-2-oxobutanoate: step 2/4. Catalyzes the isomerization between 2-isopropylmalate and 3-isopropylmalate, via the formation of 2-isopropylmaleate. This chain is 3-isopropylmalate dehydratase small subunit, found in Geobacillus sp. (strain WCH70).